Consider the following 489-residue polypeptide: Adenylosuccinate synthetase 2, chloroplastic (489 aa).

A chloroplast-targeting transit peptide spans 1–54 (MPLASLSLDPAPFPLIRPAAGWSGRVLPVPGPAPRLCRPLRAAPVAPATTDEPS). GTP-binding positions include 76-82 (GDEGKGK) and 104-106 (GHT). The Proton acceptor role is filled by D77. Mg(2+) contacts are provided by D77 and G104. Residues 77–80 (DEGK), 102–105 (NAGH), T194, R208, Q288, T303, and R367 contribute to the IMP site. H105 acts as the Proton donor in catalysis. 363–369 (TTTGRPR) is a binding site for substrate. GTP-binding positions include R369, 395-397 (KLD), and 478-480 (GVG).

Belongs to the adenylosuccinate synthetase family. In terms of assembly, homodimer. Mg(2+) is required as a cofactor.

Its subcellular location is the plastid. The protein resides in the chloroplast. It catalyses the reaction IMP + L-aspartate + GTP = N(6)-(1,2-dicarboxyethyl)-AMP + GDP + phosphate + 2 H(+). Its pathway is purine metabolism; AMP biosynthesis via de novo pathway; AMP from IMP: step 1/2. In terms of biological role, plays an important role in the de novo pathway and in the salvage pathway of purine nucleotide biosynthesis. Catalyzes the first committed step in the biosynthesis of AMP from IMP. The chain is Adenylosuccinate synthetase 2, chloroplastic from Sorghum bicolor (Sorghum).